A 153-amino-acid polypeptide reads, in one-letter code: MSSVSAAGATPPASPGCIAGIGMDLLRIERIERALARHGDRFAQKILGPKELAKFQARRRRDPARGVRFLATRFAAKEAFSKAIGLGMRMPMSWRRVQTLNAPGGRPVLVIGAELADWFDARFGAAHVSITDESDMAAAYVIVERKPAPDGRP.

Positions 24 and 78 each coordinate Mg(2+).

This sequence belongs to the P-Pant transferase superfamily. AcpS family. Mg(2+) is required as a cofactor.

The protein localises to the cytoplasm. It carries out the reaction apo-[ACP] + CoA = holo-[ACP] + adenosine 3',5'-bisphosphate + H(+). Transfers the 4'-phosphopantetheine moiety from coenzyme A to a Ser of acyl-carrier-protein. This is Holo-[acyl-carrier-protein] synthase from Bordetella pertussis (strain Tohama I / ATCC BAA-589 / NCTC 13251).